A 512-amino-acid polypeptide reads, in one-letter code: Histidine ammonia-lyase (512 aa).

Residues 146-148 (ASG) constitute a cross-link (5-imidazolinone (Ala-Gly)). A 2,3-didehydroalanine (Ser) modification is found at S147.

It belongs to the PAL/histidase family. In terms of processing, contains an active site 4-methylidene-imidazol-5-one (MIO), which is formed autocatalytically by cyclization and dehydration of residues Ala-Ser-Gly.

The protein resides in the cytoplasm. It carries out the reaction L-histidine = trans-urocanate + NH4(+). It functions in the pathway amino-acid degradation; L-histidine degradation into L-glutamate; N-formimidoyl-L-glutamate from L-histidine: step 1/3. In Paracidovorax citrulli (strain AAC00-1) (Acidovorax citrulli), this protein is Histidine ammonia-lyase.